The chain runs to 213 residues: UPF0301 protein Aave_0907 (213 aa).

Residues 93–120 (MGPSSGKQAAGEGGAQAEGEGAEESAYA) form a disordered region.

Belongs to the UPF0301 (AlgH) family.

The sequence is that of UPF0301 protein Aave_0907 from Paracidovorax citrulli (strain AAC00-1) (Acidovorax citrulli).